Reading from the N-terminus, the 402-residue chain is Probable glutamate 5-kinase (402 aa).

Residues serine 58, aspartate 145, and asparagine 157 each coordinate substrate. ATP is bound by residues 177–178 (TD) and 218–224 (TGGMKTK). The 79-residue stretch at 295-373 (HGSLEIDRGA…KEIASILGYN (79 aa)) folds into the PUA domain.

It belongs to the glutamate 5-kinase family.

Its subcellular location is the cytoplasm. The catalysed reaction is L-glutamate + ATP = L-glutamyl 5-phosphate + ADP. It participates in amino-acid biosynthesis; L-proline biosynthesis; L-glutamate 5-semialdehyde from L-glutamate: step 1/2. Functionally, catalyzes the transfer of a phosphate group to glutamate to form glutamate 5-phosphate which rapidly cyclizes to 5-oxoproline. The sequence is that of Probable glutamate 5-kinase from Schizosaccharomyces pombe (strain 972 / ATCC 24843) (Fission yeast).